A 283-amino-acid chain; its full sequence is Non-selective voltage-gated ion channel VDAC1 (283 aa).

An N-acetylalanine modification is found at Ala2. Lys12 is an ATP binding site. A Glycyl lysine isopeptide (Lys-Gly) (interchain with G-Cter in ubiquitin) cross-link involves residue Lys12. Phosphoserine is present on Ser13. The residue at position 19 (Thr19) is a Phosphothreonine. Residue Lys20 coordinates ATP. Lys20 is subject to N6-acetyllysine; alternate. N6-succinyllysine; alternate is present on Lys20. Lys20 is covalently cross-linked (Glycyl lysine isopeptide (Lys-Gly) (interchain with G-Cter in ubiquitin); alternate). The next 2 membrane-spanning stretches (beta stranded) occupy residues 26–35 (LIKLDLKTKS) and 39–47 (LEFTSSGSA). Residues Lys53 and Lys61 each participate in a glycyl lysine isopeptide (Lys-Gly) (interchain with G-Cter in ubiquitin) cross-link. The chain crosses the membrane as a beta stranded span at residues 54–64 (VTGSLETKYRW). Tyr67 carries the post-translational modification Phosphotyrosine. The next 3 membrane-spanning stretches (beta stranded) occupy residues 69–76 (LTFTEKWN), 80–89 (TLGTEITVED), and 95–104 (LKLTFDSSFS). Position 107 is a phosphothreonine (Thr107). Lys109 bears the N6-acetyllysine; alternate mark. Lys109 participates in a covalent cross-link: Glycyl lysine isopeptide (Lys-Gly) (interchain with G-Cter in ubiquitin); alternate. Residue Lys110 forms a Glycyl lysine isopeptide (Lys-Gly) (interchain with G-Cter in ubiquitin) linkage. A run of 4 beta stranded transmembrane segments spans residues 111–120 (NAKIKTGYKR), 123–130 (INLGCDMD), 137–145 (SIRGALVLG), and 150–158 (LAGYQMNFE). A Glycyl lysine isopeptide (Lys-Gly) (interchain with G-Cter in ubiquitin) cross-link involves residue Lys161. 6 beta stranded membrane-spanning segments follow: residues 163–175 (RVTQ…GYKT), 178–185 (FQLHTNVN), 189–198 (EFGGSIYQKV), 202–211 (LETAVNLAWT), 218–227 (RFGIAAKYQI), and 231–238 (ACFSAKVN). Phosphoserine; by NEK1 is present on Ser193. Ser240 is subject to Phosphoserine. 242–244 (LIG) serves as a coordination point for NAD(+). Residues 242–251 (LIGLGYTQTL) traverse the membrane as a beta stranded segment. Lys252 carries the N6-acetyllysine modification. The chain crosses the membrane as a beta stranded span at residues 254-263 (GIKLTLSALL). Residue 260-264 (SALLD) coordinates NAD(+). Lys266 carries the N6-acetyllysine; alternate modification. A Glycyl lysine isopeptide (Lys-Gly) (interchain with G-Cter in ubiquitin); alternate cross-link involves residue Lys266. Residues 273–282 (HKLGLGLEFQ) form a beta stranded membrane-spanning segment. Residue Lys274 forms a Glycyl lysine isopeptide (Lys-Gly) (interchain with G-Cter in ubiquitin) linkage.

The protein belongs to the eukaryotic mitochondrial porin family. As to quaternary structure, homodimer and homotrimer; in response to cyclic AMP or calcium; oligomerization is required for scramblase activity. Component of the mitochondrial permeability transition pore complex (mPTPC), at least composed of SPG7, VDAC1 and PPIF. Interacts with SPG7, NIPSNAP2 and SLC25A30. Interacts with hexokinases including HK1. The HK1-VDAC1 complex interacts with ATF2. Interacts with BCL2L1. Interacts with BAK1. Interacts with RTL10/BOP (via BH3 domain). Interacts with amyloid-beta and APP; induces VDAC1 dephosphorylation. Interacts with TMEM41B. Interacts with BCAP31. Interacts with HSPA9; this interaction couples ITPR1 to VDAC1. In terms of assembly, (Microbial infection) Interacts with influenza A virus PB1-F2 protein. Phosphorylation at Ser-193 by NEK1 promotes the closed conformational state preventing excessive mitochondrial membrane permeability and subsequent apoptotic cell death after injury. Phosphorylation by the AKT-GSK3B axis stabilizes the protein probably by preventing ubiquitin-mediated proteasomal degradation. Post-translationally, ubiquitinated. Undergoes monoubiquitination and polyubiquitination by PRKN; monoubiquitination at Lys-274 inhibits apoptosis, whereas polyubiquitination leads to its degradation and promotes mitophagy. Deubiquitinated by USP30. In terms of tissue distribution, expressed in erythrocytes (at protein level). Expressed in heart, liver and skeletal muscle.

It is found in the mitochondrion outer membrane. Its subcellular location is the cell membrane. The protein resides in the membrane raft. The catalysed reaction is chloride(in) = chloride(out). The enzyme catalyses K(+)(in) = K(+)(out). It carries out the reaction ATP(in) = ATP(out). It catalyses the reaction Ca(2+)(in) = Ca(2+)(out). The catalysed reaction is Na(+)(in) = Na(+)(out). The enzyme catalyses Mg(2+)(in) = Mg(2+)(out). It carries out the reaction L-glutamate(out) = L-glutamate(in). It catalyses the reaction dopamine(out) = dopamine(in). The catalysed reaction is acetylcholine(in) = acetylcholine(out). The enzyme catalyses Fe(III)-[cytochrome c](out) = Fe(III)-[cytochrome c](in). It carries out the reaction a 1,2-diacyl-sn-glycero-3-phosphocholine(in) = a 1,2-diacyl-sn-glycero-3-phosphocholine(out). It catalyses the reaction a 1,2-diacyl-sn-glycero-3-phospho-L-serine(in) = a 1,2-diacyl-sn-glycero-3-phospho-L-serine(out). With respect to regulation, inhibited by nitric oxide. Non-selective voltage-gated ion channel that mediates the transport of anions and cations through the mitochondrion outer membrane and plasma membrane. The channel at the outer mitochondrial membrane allows diffusion of small hydrophilic molecules; in the plasma membrane it is involved in cell volume regulation and apoptosis. It adopts an open conformation at low or zero membrane potential and a closed conformation at potentials above 30-40 mV. The open state has a weak anion selectivity whereas the closed state is cation-selective. Binds various signaling molecules, including the sphingolipid ceramide, the phospholipid phosphatidylcholine, and the sterols cholesterol and oxysterol. In depolarized mitochondria, acts downstream of PRKN and PINK1 to promote mitophagy or prevent apoptosis; polyubiquitination by PRKN promotes mitophagy, while monoubiquitination by PRKN decreases mitochondrial calcium influx which ultimately inhibits apoptosis. May participate in the formation of the permeability transition pore complex (PTPC) responsible for the release of mitochondrial products that triggers apoptosis. May mediate ATP export from cells. Part of a complex composed of HSPA9, ITPR1 and VDAC1 that regulates mitochondrial calcium-dependent apoptosis by facilitating calcium transport from the ER lumen to the mitochondria intermembrane space thus providing calcium for the downstream calcium channel MCU that directly releases it into mitochondria matrix. Mediates cytochrome c efflux. Its function is as follows. Catalyzes the scrambling of phospholipids across the outer mitochondrial membrane; the mechanism is unrelated to channel activity and is capable of translocating both anionic and zwitterionic phospholipids. The chain is Non-selective voltage-gated ion channel VDAC1 from Homo sapiens (Human).